The following is a 200-amino-acid chain: NADH-quinone oxidoreductase subunit I (200 aa).

2 4Fe-4S ferredoxin-type domains span residues 73–102 (RLLE…METT) and 112–141 (LNYS…HGGD). 8 residues coordinate [4Fe-4S] cluster: Cys82, Cys85, Cys88, Cys92, Cys121, Cys124, Cys127, and Cys131.

This sequence belongs to the complex I 23 kDa subunit family. As to quaternary structure, NDH-1 is composed of 14 different subunits. Subunits NuoA, H, J, K, L, M, N constitute the membrane sector of the complex. It depends on [4Fe-4S] cluster as a cofactor.

It localises to the cell inner membrane. The catalysed reaction is a quinone + NADH + 5 H(+)(in) = a quinol + NAD(+) + 4 H(+)(out). NDH-1 shuttles electrons from NADH, via FMN and iron-sulfur (Fe-S) centers, to quinones in the respiratory chain. The immediate electron acceptor for the enzyme in this species is believed to be ubiquinone. Couples the redox reaction to proton translocation (for every two electrons transferred, four hydrogen ions are translocated across the cytoplasmic membrane), and thus conserves the redox energy in a proton gradient. The protein is NADH-quinone oxidoreductase subunit I of Campylobacter hominis (strain ATCC BAA-381 / DSM 21671 / CCUG 45161 / LMG 19568 / NCTC 13146 / CH001A).